Reading from the N-terminus, the 193-residue chain is Dual-action ribosomal maturation protein DarP (193 aa).

Positions 1–10 (MRGRDEETGE) are enriched in basic and acidic residues. 2 disordered regions span residues 1–20 (MRGR…SQQR) and 171–193 (QEQG…EDDE). Residues 178 to 193 (GDSELEDGESASEDDE) show a composition bias toward acidic residues.

This sequence belongs to the DarP family.

The protein localises to the cytoplasm. Member of a network of 50S ribosomal subunit biogenesis factors which assembles along the 30S-50S interface, preventing incorrect 23S rRNA structures from forming. Promotes peptidyl transferase center (PTC) maturation. This chain is Dual-action ribosomal maturation protein DarP, found in Xanthomonas axonopodis pv. citri (strain 306).